The chain runs to 155 residues: uncharacterized protein (155 aa).

An SCP domain is found at 37 to 140 (IAELRKKLNL…GGYRLKTTDN (104 aa)).

This is an uncharacterized protein from Borreliella burgdorferi (strain ATCC 35210 / DSM 4680 / CIP 102532 / B31) (Borrelia burgdorferi).